A 156-amino-acid polypeptide reads, in one-letter code: Small ribosomal subunit protein uS7 (156 aa).

Belongs to the universal ribosomal protein uS7 family. In terms of assembly, part of the 30S ribosomal subunit. Contacts proteins S9 and S11.

Functionally, one of the primary rRNA binding proteins, it binds directly to 16S rRNA where it nucleates assembly of the head domain of the 30S subunit. Is located at the subunit interface close to the decoding center, probably blocks exit of the E-site tRNA. In Bartonella tribocorum (strain CIP 105476 / IBS 506), this protein is Small ribosomal subunit protein uS7.